We begin with the raw amino-acid sequence, 149 residues long: Large ribosomal subunit protein bL20m (149 aa).

The transit peptide at 1–9 (MVFLSLSRW) directs the protein to the mitochondrion.

It belongs to the bacterial ribosomal protein bL20 family. In terms of assembly, component of the mitochondrial ribosome large subunit (39S) which comprises a 16S rRNA and about 50 distinct proteins.

It localises to the mitochondrion. The polypeptide is Large ribosomal subunit protein bL20m (mrpl20) (Xenopus laevis (African clawed frog)).